The primary structure comprises 219 residues: Ribose-5-phosphate isomerase A (219 aa).

Residues 28–31 (SGST), 81–84 (DGAD), and 94–97 (KGGG) each bind substrate. Catalysis depends on E103, which acts as the Proton acceptor. K121 contributes to the substrate binding site.

It belongs to the ribose 5-phosphate isomerase family. Homodimer.

The enzyme catalyses aldehydo-D-ribose 5-phosphate = D-ribulose 5-phosphate. The protein operates within carbohydrate degradation; pentose phosphate pathway; D-ribose 5-phosphate from D-ribulose 5-phosphate (non-oxidative stage): step 1/1. Functionally, catalyzes the reversible conversion of ribose-5-phosphate to ribulose 5-phosphate. The polypeptide is Ribose-5-phosphate isomerase A (Histophilus somni (strain 2336) (Haemophilus somnus)).